Consider the following 382-residue polypeptide: MSAYSRPVLLLLCGLLLFTISIAVLNTLVPLWLSHQQLPTWQVGMVSSSYFTGNLVGTLIAGRFIQQLGFNRSYHCSCILFALATCGLMLTVDFWSWLGWRFLAGIACALIWVIVESALLRSGTLTNRGQLLAAYMMVYYLGTVIGQLLLGIVSTQLLSVIPWVGALVITAMLPLLFAQFSHQSRHESPPIAVWPMLKRRSARLGINGCIISGVLLGSLYGLLPLYLSHKGMSDASVGGWMALLVSSGIIGQWPMGRMADRYGRLLVLRIQVFVVILGSVAILGNYAMAPALFILGCAGFTLYPVAMAWACEKASADELVAMNQALLMSYTLGSLAGPTMTSLLMQRYSDNLLFIMIAGVAFVYLMMLLRKPDHQQTPYAAV.

11 helical membrane passes run 8 to 28 (VLLL…LNTL), 41 to 61 (WQVG…TLIA), 73 to 93 (SYHC…LTVD), 94 to 114 (FWSW…IWVI), 133 to 153 (AAYM…LGIV), 157 to 177 (LLSV…PLLF), 208 to 228 (GCII…LYLS), 235 to 255 (ASVG…QWPM), 274 to 294 (VVIL…ALFI), 325 to 345 (ALLM…SLLM), and 349 to 369 (SDNL…MMLL).

Belongs to the major facilitator superfamily. YcaD (TC 2.A.1.26) family.

It localises to the cell inner membrane. This is an uncharacterized protein from Yersinia pseudotuberculosis serotype IB (strain PB1/+).